The chain runs to 243 residues: Outer membrane protein A (243 aa).

Transmembrane regions (beta stranded) follow at residues 1–8 (LAAKLSYP), 13–21 (LDIYTRLGG), 48–57 (PLAAVGVEYA), 62–69 (WATRLDYQ), and 88–96 (MLSLGVSYR). 5 tandem repeats follow at residues 104–105 (AP), 106–107 (AP), 108–109 (AP), 110–111 (AP), and 112–113 (AP). The interval 104–113 (APAPAPAPAP) is 5 X 2 AA tandem repeats of A-P. Positions 115-243 (VETKLFTLKS…RRVEIEVKGI (129 aa)) constitute an OmpA-like domain. Cys215 and Cys229 are joined by a disulfide.

It belongs to the outer membrane OOP (TC 1.B.6) superfamily. OmpA family. Monomer and homodimer.

It is found in the cell outer membrane. With TolR probably plays a role in maintaining the position of the peptidoglycan cell wall in the periplasm. Acts as a porin with low permeability that allows slow penetration of small solutes; an internal gate slows down solute passage. The sequence is that of Outer membrane protein A from Serratia odorifera.